Here is a 271-residue protein sequence, read N- to C-terminus: Beta-lysine N(6)-acetyltransferase (271 aa).

A disordered region spans residues 86 to 122; sequence LRKDRGTGKNQKKKKISRKKDNWKKRKEKSRLPEGYT. Basic residues predominate over residues 95–114; sequence NQKKKKISRKKDNWKKRKEK. Residues 121–269 enclose the N-acetyltransferase domain; the sequence is YTLRPAVQAD…GFEDMNIWCR (149 aa).

Belongs to the acetyltransferase family.

It carries out the reaction (3S)-3,6-diaminohexanoate + acetyl-CoA = (3S)-6-acetamido-3-aminohexanoate + CoA + H(+). Its function is as follows. Catalyzes the acetylation of beta-lysine to N6-acetyl-beta-lysine, a compatible solute produced by methanogenic archaea that helps cells to cope with salt stress. The sequence is that of Beta-lysine N(6)-acetyltransferase from Methanosarcina mazei (strain ATCC BAA-159 / DSM 3647 / Goe1 / Go1 / JCM 11833 / OCM 88) (Methanosarcina frisia).